Reading from the N-terminus, the 279-residue chain is Movement protein (279 aa).

This sequence belongs to the cucumovirus movement protein family.

The protein resides in the host cell junction. It is found in the host plasmodesma. Functionally, transports viral genome to neighboring plant cells directly through plasmosdesmata, without any budding. The movement protein allows efficient cell to cell propagation, by bypassing the host cell wall barrier. Acts by forming a tubular structure at the host plasmodesmata, enlarging it enough to allow free passage of virion capsids. The sequence is that of Movement protein from Cucumber mosaic virus (strain M) (CMV).